Reading from the N-terminus, the 253-residue chain is MTTSRCSHLPEVLPDCTSSAAPVVKTVEDCGSLVNGQPQYVMQVSAKDGQLLSTVVRTLATQSPFNDRPMCRICHEGSSQEDLLSPCECTGTLGTIHRSCLEHWLSSSNTSYCELCHFRFAVERKPRPLVEWLRNPGPQHEKRTLFGDMVCFLFITPLATISGWLCLRGAVDHLHFSSRLEAVGLIALTVALFTIYLFWTLVSFRYHCRLYNEWRRTNQRVILLIPKSVNIPSNQQSLLGLHSVKRNSKETIV.

An RING-CH-type zinc finger spans residues 63–123 (SPFNDRPMCR…ELCHFRFAVE (61 aa)). Zn(2+) contacts are provided by C71, C74, C87, C89, H97, C100, C113, and C116. The next 2 helical transmembrane spans lie at 145–165 (LFGD…SGWL) and 182–202 (AVGL…WTLV). A phosphoserine mark is found at S237 and S243.

As to quaternary structure, interacts with MARCHF2 and STX6. In terms of tissue distribution, expressed predominantly in lung, colon and spleen. Present in liver (at protein level).

It localises to the cytoplasmic vesicle membrane. It is found in the early endosome membrane. The enzyme catalyses S-ubiquitinyl-[E2 ubiquitin-conjugating enzyme]-L-cysteine + [acceptor protein]-L-lysine = [E2 ubiquitin-conjugating enzyme]-L-cysteine + N(6)-ubiquitinyl-[acceptor protein]-L-lysine.. It participates in protein modification; protein ubiquitination. In terms of biological role, E3 ubiquitin-protein ligase which may be involved in endosomal trafficking. E3 ubiquitin ligases accept ubiquitin from an E2 ubiquitin-conjugating enzyme in the form of a thioester and then directly transfer the ubiquitin to targeted substrates. In Rattus norvegicus (Rat), this protein is E3 ubiquitin-protein ligase MARCHF3 (Marchf3).